The following is a 236-amino-acid chain: Large ribosomal subunit protein uL2 (236 aa).

Polar residues predominate over residues 1–10 (MGHRITTQSR). Disordered stretches follow at residues 1–20 (MGHR…YRAP) and 202–236 (GGGG…TGRR). Over residues 224-236 (KVGHIAARRTGRR) the composition is skewed to basic residues.

The protein belongs to the universal ribosomal protein uL2 family. In terms of assembly, part of the 50S ribosomal subunit. Forms a bridge to the 30S subunit in the 70S ribosome.

One of the primary rRNA binding proteins. Required for association of the 30S and 50S subunits to form the 70S ribosome, for tRNA binding and peptide bond formation. It has been suggested to have peptidyltransferase activity; this is somewhat controversial. Makes several contacts with the 16S rRNA in the 70S ribosome. This is Large ribosomal subunit protein uL2 from Methanospirillum hungatei JF-1 (strain ATCC 27890 / DSM 864 / NBRC 100397 / JF-1).